The following is a 331-amino-acid chain: MKQTVYIASPESQQIHVWNLNHEGALTLTQVVDVPGQVQPMVVSPDKRYLYVGVRPEFRVLAYRIAPDDGALTFAAESALPGSPTHISTDHQGQFVFVGSYNAGNVSVTRLEDGLPVGVVDVVEGLDGCHSANISPDNRTLWVPALKQDRICLFTVSDDGHLVAQDPAEVTTVEGAGPRHMVFHPNEQYAYCVNELNSSVDVWELKDPHGNIECVQTLDMMPENFSDTRWAADIHITPDGRHLYACDRTASLITVFSVSEDGSVLSKEGFQPTETQPRGFNVDHSGKYLIAAGQKSHHISVYEIVGEQGLLHEKGRYAVGQGPMWVVVNAH.

Lys-287 carries the N6-acetyllysine modification.

Belongs to the cycloisomerase 2 family.

The catalysed reaction is 6-phospho-D-glucono-1,5-lactone + H2O = 6-phospho-D-gluconate + H(+). The protein operates within carbohydrate degradation; pentose phosphate pathway; D-ribulose 5-phosphate from D-glucose 6-phosphate (oxidative stage): step 2/3. Functionally, catalyzes the hydrolysis of 6-phosphogluconolactone to 6-phosphogluconate. The sequence is that of 6-phosphogluconolactonase from Escherichia coli O139:H28 (strain E24377A / ETEC).